The following is a 237-amino-acid chain: KH homology domain-containing protein 1 (237 aa).

Transmembrane regions (helical) follow at residues 7–29 (RLFR…FIYG) and 33–50 (LQTL…HLWI). Residues 96 to 155 (PMVFHMEEDQEELIFGHGDTYLRCIEVHSHTLIQLESWFTATGQTRVTVVGPHRARQWLL) form the KH; atypical domain.

It belongs to the KHDC1 family.

It is found in the membrane. This Homo sapiens (Human) protein is KH homology domain-containing protein 1.